Here is a 448-residue protein sequence, read N- to C-terminus: N-succinylarginine dihydrolase (448 aa).

Residues 19–28, Asn-110, and 137–138 contribute to the substrate site; these read GGLSYGNVAS and HR. Residue Glu-174 is part of the active site. Arg-214 lines the substrate pocket. His-250 is an active-site residue. Residues Asp-252 and Asn-365 each coordinate substrate. Cys-371 acts as the Nucleophile in catalysis.

It belongs to the succinylarginine dihydrolase family. As to quaternary structure, homodimer.

The enzyme catalyses N(2)-succinyl-L-arginine + 2 H2O + 2 H(+) = N(2)-succinyl-L-ornithine + 2 NH4(+) + CO2. Its pathway is amino-acid degradation; L-arginine degradation via AST pathway; L-glutamate and succinate from L-arginine: step 2/5. Catalyzes the hydrolysis of N(2)-succinylarginine into N(2)-succinylornithine, ammonia and CO(2). This Pseudomonas aeruginosa (strain UCBPP-PA14) protein is N-succinylarginine dihydrolase.